The primary structure comprises 325 residues: NADH-quinone oxidoreductase subunit H (325 aa).

8 helical membrane passes run 11–31, 81–101, 114–134, 149–169, 186–206, 237–257, 265–285, and 304–324; these read VLIA…CGAL, MIFT…FAIV, IGIL…LFAG, ASAQ…GVVA, MWNV…GVAV, FFVG…TMFF, LPPF…FILI, and ICLP…LYNA.

This sequence belongs to the complex I subunit 1 family. As to quaternary structure, NDH-1 is composed of 13 different subunits. Subunits NuoA, H, J, K, L, M, N constitute the membrane sector of the complex.

The protein resides in the cell inner membrane. The catalysed reaction is a quinone + NADH + 5 H(+)(in) = a quinol + NAD(+) + 4 H(+)(out). Functionally, NDH-1 shuttles electrons from NADH, via FMN and iron-sulfur (Fe-S) centers, to quinones in the respiratory chain. The immediate electron acceptor for the enzyme in this species is believed to be ubiquinone. Couples the redox reaction to proton translocation (for every two electrons transferred, four hydrogen ions are translocated across the cytoplasmic membrane), and thus conserves the redox energy in a proton gradient. This subunit may bind ubiquinone. This chain is NADH-quinone oxidoreductase subunit H, found in Photorhabdus laumondii subsp. laumondii (strain DSM 15139 / CIP 105565 / TT01) (Photorhabdus luminescens subsp. laumondii).